Here is a 358-residue protein sequence, read N- to C-terminus: MSYITPTKRIFTPEDLSKWVGSPTYNTVLDFIVELQSSVTGKSNDSSYETSSIIDKLSKLLSKVDNLITLHPAHDSVSRFGKIEFRDFYSDLSSKAEEYISEITATAIQETSAYFIESWGNSTRIDYGSGHELNFICFLLCLKELGQITSADYEGLVLKVFTQYMSIMRKLQKEYWLEPAGSHGVWGLDDYHFLPFLFGAAQLSTHPHMKPKSIHNDELVEMYSTKYMYFECINFINKIKTIPNHQGKLSLRWHSPMLDDISAAKNWDKIREGMVKMYKVEVLGKLPIMQHFMFGSLLKCPEGIPEHTDENGHGENPEDHCGHAHVNTWGDCCGIKIPSGIAASESLKHERKGNIPFD.

It belongs to the PTPA-type PPIase family.

Its subcellular location is the cytoplasm. It catalyses the reaction [protein]-peptidylproline (omega=180) = [protein]-peptidylproline (omega=0). Functionally, PPIases accelerate the folding of proteins. It catalyzes the cis-trans isomerization of proline imidic peptide bonds in oligopeptides. Acts as a regulatory subunit for PP2A-like phosphatases modulating their activity or substrate specificity, probably by inducing a conformational change in the catalytic subunit, a direct target of the PPIase. Can reactivate inactive phosphatase PP2A-phosphatase methylesterase complexes (PP2Ai) in presence of ATP and Mg(2+) by dissociating the inactive form from the complex. This is Serine/threonine-protein phosphatase 2A activator 2 (RRD2) from Candida albicans (strain SC5314 / ATCC MYA-2876) (Yeast).